The sequence spans 154 residues: Ribonuclease H (154 aa).

Residues 1–142 (MTKQVEIFTD…CDELARQGAN (142 aa)) enclose the RNase H type-1 domain. Residues Asp10, Glu48, Asp70, and Asp134 each coordinate Mg(2+).

Belongs to the RNase H family. Monomer. Requires Mg(2+) as cofactor.

The protein localises to the cytoplasm. The catalysed reaction is Endonucleolytic cleavage to 5'-phosphomonoester.. Endonuclease that specifically degrades the RNA of RNA-DNA hybrids. This is Ribonuclease H from Yersinia pestis bv. Antiqua (strain Antiqua).